The primary structure comprises 344 residues: Protein BREVIS RADIX (344 aa).

Residues Lys-139–Asn-194 enclose the BRX 1 domain. Positions Leu-203 to Glu-286 are disordered. The span at Asp-223–Pro-233 shows a compositional bias: basic and acidic residues. The span at Tyr-248–Pro-264 shows a compositional bias: low complexity. Positions Ala-289–Leu-344 constitute a BRX 2 domain.

The protein belongs to the BRX family. Homodimer and heterodimer with BRXL1. Interacts with NGA1 and ARF5. Expressed in the developing protophloem up to the elongation zone in root meristem of young seedlings, in the columella and the phloem vasculature throughout the root and in the phloem vasculature in the shoot. Detected in the shoot meristem and in primordia. Low expression in stomata. Confined to sieve element precursor cells and to protophloem.

It is found in the nucleus. It localises to the cell membrane. Its function is as follows. Acts as a regulator of cell proliferation and elongation in the root and shoot. Regulates roots architecture and primary root protophloem differentiation. BRX, BAM3, and CLE45 act together to regulate the transition of protophloem cells from proliferation to differentiation, thus impinging on postembryonic growth capacity of the root meristem. Probable transcription regulator. Regulated by the auxin response factor ARF5. Polarly localized in vascular cells and subject to endocytic recycling. Required for CPD expression and for correct nuclear auxin response. Mediates cross-talk between the auxin and brassinosteroid pathways. BRX is a target for auxin-induced, proteasome-mediated degradation. The sequence is that of Protein BREVIS RADIX from Arabidopsis thaliana (Mouse-ear cress).